A 751-amino-acid chain; its full sequence is Photosystem I P700 chlorophyll a apoprotein A1 (751 aa).

Transmembrane regions (helical) follow at residues Ile-73–Ala-96, Leu-159–His-182, Met-198–Leu-222, Thr-294–Tyr-312, Trp-349–Tyr-372, Leu-388–Val-414, Ala-435–His-457, and Phe-532–Val-550. Cys-574 and Cys-583 together coordinate [4Fe-4S] cluster. A run of 2 helical transmembrane segments spans residues His-590–Trp-611 and Leu-665–Phe-687. Position 676 (His-676) interacts with chlorophyll a'. Met-684 and Tyr-692 together coordinate chlorophyll a. Trp-693 provides a ligand contact to phylloquinone. Residues Ala-725–Ala-745 form a helical membrane-spanning segment.

Belongs to the PsaA/PsaB family. In terms of assembly, the PsaA/B heterodimer binds the P700 chlorophyll special pair and subsequent electron acceptors. PSI consists of a core antenna complex that captures photons, and an electron transfer chain that converts photonic excitation into a charge separation. The eukaryotic PSI reaction center is composed of at least 11 subunits. Requires P700 is a chlorophyll a/chlorophyll a' dimer, A0 is one or more chlorophyll a, A1 is one or both phylloquinones and FX is a shared 4Fe-4S iron-sulfur center. as cofactor.

The protein resides in the plastid. The protein localises to the chloroplast thylakoid membrane. It carries out the reaction reduced [plastocyanin] + hnu + oxidized [2Fe-2S]-[ferredoxin] = oxidized [plastocyanin] + reduced [2Fe-2S]-[ferredoxin]. Functionally, psaA and PsaB bind P700, the primary electron donor of photosystem I (PSI), as well as the electron acceptors A0, A1 and FX. PSI is a plastocyanin/cytochrome c6-ferredoxin oxidoreductase, converting photonic excitation into a charge separation, which transfers an electron from the donor P700 chlorophyll pair to the spectroscopically characterized acceptors A0, A1, FX, FA and FB in turn. Oxidized P700 is reduced on the lumenal side of the thylakoid membrane by plastocyanin or cytochrome c6. The polypeptide is Photosystem I P700 chlorophyll a apoprotein A1 (Pyropia yezoensis (Susabi-nori)).